The sequence spans 364 residues: Chorismate synthase (364 aa).

The NADP(+) site is built by R48 and R54. FMN is bound by residues 125–127 (RSS), 238–239 (NA), G278, 293–297 (KPTSS), and R319.

Belongs to the chorismate synthase family. Homotetramer. FMNH2 is required as a cofactor.

It catalyses the reaction 5-O-(1-carboxyvinyl)-3-phosphoshikimate = chorismate + phosphate. Its pathway is metabolic intermediate biosynthesis; chorismate biosynthesis; chorismate from D-erythrose 4-phosphate and phosphoenolpyruvate: step 7/7. Its function is as follows. Catalyzes the anti-1,4-elimination of the C-3 phosphate and the C-6 proR hydrogen from 5-enolpyruvylshikimate-3-phosphate (EPSP) to yield chorismate, which is the branch point compound that serves as the starting substrate for the three terminal pathways of aromatic amino acid biosynthesis. This reaction introduces a second double bond into the aromatic ring system. This is Chorismate synthase from Marinobacter nauticus (strain ATCC 700491 / DSM 11845 / VT8) (Marinobacter aquaeolei).